A 188-amino-acid polypeptide reads, in one-letter code: Probable DNA-directed RNA polymerase subunit delta (188 aa).

The 70-residue stretch at 14–83 (LSMIEVARAI…GENKWGLRSW (70 aa)) folds into the HTH HARE-type domain. Positions 119–188 (EDAIDYSADD…EDEEDEDEEE (70 aa)) are disordered.

The protein belongs to the RpoE family. RNAP is composed of a core of 2 alpha, a beta and a beta' subunits. The core is associated with a delta subunit and one of several sigma factors.

Its function is as follows. Participates in both the initiation and recycling phases of transcription. In the presence of the delta subunit, RNAP displays an increased specificity of transcription, a decreased affinity for nucleic acids, and an increased efficiency of RNA synthesis because of enhanced recycling. The chain is Probable DNA-directed RNA polymerase subunit delta from Streptococcus equi subsp. zooepidemicus (strain H70).